An 81-amino-acid polypeptide reads, in one-letter code: Cytoplasmic envelopment protein 3 (81 aa).

A lipid anchor (N-myristoyl glycine; by host) is attached at glycine 2. Residues 22–23 (LV) carry the Di-leucine-like internalization motif motif. The segment at 41–47 (DFDENVT) is asp/Glu-rich (acidic). Positions 47 to 81 (TEDADKSTQRRPRVIDVTPKRKPSGKSSHSKCAKC) are disordered. Residues 66–81 (KRKPSGKSSHSKCAKC) are compositionally biased toward basic residues.

The protein belongs to the herpesviridae cytoplasmic envelopment protein 3 family. As to quaternary structure, interacts with cytoplasmic envelopment protein 2; this interaction is essential for the proper localization of each protein to the assembly complex and thus for the production of infectious virus. Post-translationally, myristoylation and palmitoylation (probably on one or more of the nearby cysteines at the N-terminus) enable membrane-binding and Golgi apparatus-specific targeting and are essential for efficient packaging. In terms of processing, phosphorylated. Phosphorylation does not seem to be required for recycling to the host Golgi apparatus. Packaging is selective for underphosphorylated forms.

It is found in the virion tegument. It localises to the virion membrane. The protein resides in the host cell membrane. The protein localises to the host Golgi apparatus membrane. In terms of biological role, plays an important role in the cytoplasmic envelopment of tegument proteins and capsids during the assembly and egress processes. Also participates in viral entry at the fusion step probably by regulating the core fusion machinery. In Homo sapiens (Human), this protein is Cytoplasmic envelopment protein 3.